We begin with the raw amino-acid sequence, 114 residues long: Macrophage migration inhibitory factor homolog (114 aa).

The active-site Proton acceptor; via imino nitrogen is P2. K33 and I65 together coordinate substrate.

Belongs to the MIF family.

The protein localises to the secreted. The catalysed reaction is L-dopachrome = 5,6-dihydroxyindole-2-carboxylate. It catalyses the reaction 3-phenylpyruvate = enol-phenylpyruvate. Tautomerization of the methyl ester of L-dopachrome. Inhibits migration of human peripheral blood mononuclear cells. The polypeptide is Macrophage migration inhibitory factor homolog (Trichinella spiralis (Trichina worm)).